Reading from the N-terminus, the 146-residue chain is SecB-like chaperone SmegB (146 aa).

The protein belongs to the SecB-like family.

Its function is as follows. Chaperone component of an orphan antitoxin chaperone (AC) system; there is no toxin gene in close genomic proximity. When expressed in E.coli complements the cold-sensitive phenotype of a secB deletion, suggesting it may have a generic chaperone function. Does not however complement the toxin-neutralizing effect of its M.tuberculosis paralog Rv1957 (AC P95257) in E.coli, probably because the antitoxin genes are not from the same family. The chain is SecB-like chaperone SmegB from Mycolicibacterium smegmatis (strain ATCC 700084 / mc(2)155) (Mycobacterium smegmatis).